Consider the following 190-residue polypeptide: Segregation and condensation protein B (190 aa).

This sequence belongs to the ScpB family. As to quaternary structure, homodimer. Homodimerization may be required to stabilize the binding of ScpA to the Smc head domains. Component of a cohesin-like complex composed of ScpA, ScpB and the Smc homodimer, in which ScpA and ScpB bind to the head domain of Smc. The presence of the three proteins is required for the association of the complex with DNA.

It localises to the cytoplasm. In terms of biological role, participates in chromosomal partition during cell division. May act via the formation of a condensin-like complex containing Smc and ScpA that pull DNA away from mid-cell into both cell halves. In Bacillus cereus (strain ATCC 14579 / DSM 31 / CCUG 7414 / JCM 2152 / NBRC 15305 / NCIMB 9373 / NCTC 2599 / NRRL B-3711), this protein is Segregation and condensation protein B.